The sequence spans 379 residues: NAD-dependent protein deacetylase sirtuin-2 (379 aa).

Residues Met1 to Glu10 are compositionally biased toward basic and acidic residues. The disordered stretch occupies residues Met1–Ser32. The segment covering Gln21 to Ser32 has biased composition (acidic residues). Residues Lys55–Lys335 form the Deacetylase sirtuin-type domain. NAD(+) is bound by residues Ala83 to Thr87, Asp93 to Arg95, and Gln165 to Asp168. Residue His185 is the Proton acceptor of the active site. Zn(2+) contacts are provided by Cys193, Cys198, Cys219, and Cys222. NAD(+) is bound by residues Thr260 to Ser261, Asn284 to Glu286, and Cys321. Over residues Ile349–Ala361 the composition is skewed to basic and acidic residues. Residues Ile349–Glu379 form a disordered region.

This sequence belongs to the sirtuin family. Class I subfamily. Zn(2+) is required as a cofactor.

The protein resides in the cytoplasm. The protein localises to the nucleus. The enzyme catalyses N(6)-acetyl-L-lysyl-[protein] + NAD(+) + H2O = 2''-O-acetyl-ADP-D-ribose + nicotinamide + L-lysyl-[protein]. It carries out the reaction N(6)-tetradecanoyl-L-lysyl-[protein] + NAD(+) + H2O = 2''-O-tetradecanoyl-ADP-D-ribose + nicotinamide + L-lysyl-[protein]. It catalyses the reaction N(6)-hexadecanoyl-L-lysyl-[protein] + NAD(+) + H2O = 2''-O-hexadecanoyl-ADP-D-ribose + nicotinamide + L-lysyl-[protein]. Functionally, NAD-dependent protein deacetylase, which deacetylates internal lysines on histone and alpha-tubulin as well as many other proteins such as key transcription factors. Participates in the modulation of multiple and diverse biological processes such as cell cycle control, genomic integrity, microtubule dynamics, cell differentiation, metabolic networks, and autophagy. Plays a major role in the control of cell cycle progression and genomic stability. Deacetylates histone H4 at 'Lys-16' (H4K16ac) at the VEGFA promoter. Thereby contributes to regulate expression of vegfa, a key regulator of angiogenesis. In addition to protein deacetylase activity, also has activity toward long-chain fatty acyl groups and mediates protein-lysine demyristoylation and depalmitoylation of target proteins. This is NAD-dependent protein deacetylase sirtuin-2 (sirt2) from Danio rerio (Zebrafish).